A 314-amino-acid chain; its full sequence is Olfactory receptor 5P68 (314 aa).

Residues 1–28 (MAFLHNGNHTAVTEFILLGLTDDPVFRV) are Extracellular-facing. An N-linked (GlcNAc...) asparagine glycan is attached at N8. The chain crosses the membrane as a helical span at residues 29-49 (ILFTIILCIYLVTVSGNLSTI). The Cytoplasmic segment spans residues 50–57 (LLIRVSSQ). A helical membrane pass occupies residues 58–78 (LHHPMYFFLSHLASVDIGYSS). The Extracellular portion of the chain corresponds to 79 to 102 (SVTPNMLANFLVEKNTISYLGCTI). C100 and C192 form a disulfide bridge. The helical transmembrane segment at 103-123 (QLSLAAFCGTVECFLLATMAY) threads the bilayer. The Cytoplasmic segment spans residues 124 to 136 (DRFMAICSPLLYS). A helical transmembrane segment spans residues 137–157 (TKMSTQVCIQLIVGSYIGGFL). The Extracellular portion of the chain corresponds to 158–199 (NASSFTLFFLSFLFCGPNRINHFYCDFAPLVALSCSDVSVSE). A helical transmembrane segment spans residues 200 to 220 (VVTSFFSGSVTMITMLVIAIS). The Cytoplasmic portion of the chain corresponds to 221–240 (YTYILITILKMRSTEGRHKA). A helical membrane pass occupies residues 241–261 (FSTCTSHLTAVTLFYGTITFI). Topologically, residues 262–274 (YVMPKSSFSTDQN) are extracellular. Residues 275-295 (KVVSVFYMVVIPMLNPLIYSL) form a helical membrane-spanning segment. Residues 296 to 314 (RNNEIKDALKRHLGKKIFS) lie on the Cytoplasmic side of the membrane.

It belongs to the G-protein coupled receptor 1 family.

Its subcellular location is the cell membrane. Potential odorant receptor. The sequence is that of Olfactory receptor 5P68 from Mus musculus (Mouse).